Here is a 756-residue protein sequence, read N- to C-terminus: 5-methyltetrahydropteroyltriglutamate--homocysteine methyltransferase (756 aa).

Residues R16–K19 and K112 contribute to the 5-methyltetrahydropteroyltri-L-glutamate site. L-homocysteine contacts are provided by residues I432–S434 and E485. L-methionine is bound by residues I432–S434 and E485. 5-methyltetrahydropteroyltri-L-glutamate is bound by residues R516 to C517 and W562. D600 lines the L-homocysteine pocket. D600 is a binding site for L-methionine. 5-methyltetrahydropteroyltri-L-glutamate is bound at residue E606. 3 residues coordinate Zn(2+): H642, C644, and E666. The active-site Proton donor is the H695. C727 contributes to the Zn(2+) binding site.

It belongs to the vitamin-B12 independent methionine synthase family. It depends on Zn(2+) as a cofactor.

The enzyme catalyses 5-methyltetrahydropteroyltri-L-glutamate + L-homocysteine = tetrahydropteroyltri-L-glutamate + L-methionine. Its pathway is amino-acid biosynthesis; L-methionine biosynthesis via de novo pathway; L-methionine from L-homocysteine (MetE route): step 1/1. Functionally, catalyzes the transfer of a methyl group from 5-methyltetrahydrofolate to homocysteine resulting in methionine formation. The protein is 5-methyltetrahydropteroyltriglutamate--homocysteine methyltransferase of Haemophilus influenzae (strain ATCC 51907 / DSM 11121 / KW20 / Rd).